The chain runs to 167 residues: MSAPILEMDIDPVWGDAIDWEDIASRAAEAAAKVAPELAHENLLVSVVLADDDEVHALNKQWRAKDKPTNVLSFPMLSREEVLHAAADEGAPGMLGDMILAHGVCTREAAEKGVSVETHATHLVVHGLLHLAGYDHELGEAEAEEMENLERKALALMGIADPYAVED.

Positions 126, 130, and 136 each coordinate Zn(2+).

Belongs to the endoribonuclease YbeY family. The cofactor is Zn(2+).

It localises to the cytoplasm. Functionally, single strand-specific metallo-endoribonuclease involved in late-stage 70S ribosome quality control and in maturation of the 3' terminus of the 16S rRNA. This chain is Endoribonuclease YbeY, found in Novosphingobium aromaticivorans (strain ATCC 700278 / DSM 12444 / CCUG 56034 / CIP 105152 / NBRC 16084 / F199).